Here is a 179-residue protein sequence, read N- to C-terminus: ADP-ribosylation factor-like protein 5B (179 aa).

The N-myristoyl glycine moiety is linked to residue glycine 2. Residues 23 to 30 (GLDNAGKT), 66 to 70 (DIGGQ), 125 to 128 (NKQD), and alanine 159 contribute to the GTP site.

Belongs to the small GTPase superfamily. Arf family.

Its function is as follows. Binds and exchanges GTP and GDP. In Mus musculus (Mouse), this protein is ADP-ribosylation factor-like protein 5B (Arl5b).